The primary structure comprises 400 residues: Cytochrome b (400 aa).

4 helical membrane passes run 32–52 (FGSLLALCLGIQIVTGVTLAM), 76–98 (WLIRYLHSNTASAFFFLVYLHIG), 113–133 (TWSIGTIIFIAMVATAFLGYV), and 179–199 (FFSLHFLLPFILAALVLMHLI). The heme b site is built by H82 and H96. Positions 183 and 197 each coordinate heme b. An a ubiquinone-binding site is contributed by H202. A run of 4 helical transmembrane segments spans residues 226–246 (YLFKDLVTIFLFMLILSIFVF), 290–310 (AVGVVLMFGAILIILALPYLD), 322–342 (LSKVAFYIFVANFLVLMQLGA), and 349–369 (FIVFGQLSTILYFSYFIIIIP).

It belongs to the cytochrome b family. As to quaternary structure, fungal cytochrome b-c1 complex contains 10 subunits; 3 respiratory subunits, 2 core proteins and 5 low-molecular weight proteins. Cytochrome b-c1 complex is a homodimer. It depends on heme b as a cofactor.

The protein localises to the mitochondrion inner membrane. In terms of biological role, component of the ubiquinol-cytochrome c reductase complex (complex III or cytochrome b-c1 complex) that is part of the mitochondrial respiratory chain. The b-c1 complex mediates electron transfer from ubiquinol to cytochrome c. Contributes to the generation of a proton gradient across the mitochondrial membrane that is then used for ATP synthesis. The chain is Cytochrome b (cob) from Epidermophyton floccosum.